A 242-amino-acid polypeptide reads, in one-letter code: Ribose-5-phosphate isomerase A (242 aa).

Residues 39–42 (SGST), 95–98 (DGAD), and 108–111 (KGGG) each bind substrate. The Proton acceptor role is filled by E117. K135 lines the substrate pocket.

It belongs to the ribose 5-phosphate isomerase family. Homodimer.

The enzyme catalyses aldehydo-D-ribose 5-phosphate = D-ribulose 5-phosphate. Its pathway is carbohydrate degradation; pentose phosphate pathway; D-ribose 5-phosphate from D-ribulose 5-phosphate (non-oxidative stage): step 1/1. Catalyzes the reversible conversion of ribose-5-phosphate to ribulose 5-phosphate. The protein is Ribose-5-phosphate isomerase A of Chlamydia trachomatis serovar D (strain ATCC VR-885 / DSM 19411 / UW-3/Cx).